We begin with the raw amino-acid sequence, 157 residues long: Ribosome maturation factor RimP (157 aa).

It belongs to the RimP family.

Its subcellular location is the cytoplasm. Required for maturation of 30S ribosomal subunits. In Streptococcus thermophilus (strain ATCC BAA-491 / LMD-9), this protein is Ribosome maturation factor RimP.